We begin with the raw amino-acid sequence, 250 residues long: 3-deoxy-manno-octulosonate cytidylyltransferase (250 aa).

Belongs to the KdsB family.

The protein resides in the cytoplasm. It carries out the reaction 3-deoxy-alpha-D-manno-oct-2-ulosonate + CTP = CMP-3-deoxy-beta-D-manno-octulosonate + diphosphate. It functions in the pathway nucleotide-sugar biosynthesis; CMP-3-deoxy-D-manno-octulosonate biosynthesis; CMP-3-deoxy-D-manno-octulosonate from 3-deoxy-D-manno-octulosonate and CTP: step 1/1. The protein operates within bacterial outer membrane biogenesis; lipopolysaccharide biosynthesis. Its function is as follows. Activates KDO (a required 8-carbon sugar) for incorporation into bacterial lipopolysaccharide in Gram-negative bacteria. The sequence is that of 3-deoxy-manno-octulosonate cytidylyltransferase from Francisella tularensis subsp. holarctica (strain FTNF002-00 / FTA).